Consider the following 314-residue polypeptide: BTB/POZ domain-containing protein KCTD17 (314 aa).

One can recognise a BTB domain in the interval 24–94 (KWVRLNVGGT…LRHGKLVLDK (71 aa)). Residues 190 to 268 (STPNGLSSES…PAGGSRPHPL (79 aa)) form a disordered region. The stretch at 196–239 (SSESSRKTKSTEEQLEEQQQQEEEVEEVEVEQVQVEADAQEKAQ) forms a coiled coil. Residues 208-225 (EQLEEQQQQEEEVEEVEV) show a composition bias toward acidic residues.

In terms of assembly, homopentamer; forms a closed pentamer. Interacts with CUL3; interaction is direct and forms a 5:5 heterodecamer. Interacts with TCHP. Interacts with CUL3, as part of the BCR(KCTD17) E3 ubiquitin ligase complex, at least composed of CUL3, KCTD17 and RBX1. Highly expressed in brain. Highest expression is observed in the putamen and the thalamus.

It is found in the cytoplasm. Its function is as follows. Substrate-adapter for CUL3-RING ubiquitin ligase complexes which mediates the ubiquitination and subsequent proteasomal degradation of TCHP, a protein involved in ciliogenesis down-regulation. Thereby, positively regulates ciliogenesis, playing a crucial role in the initial steps of axoneme extension. May also play a role in endoplasmic reticulum calcium ion homeostasis. This chain is BTB/POZ domain-containing protein KCTD17, found in Homo sapiens (Human).